Consider the following 64-residue polypeptide: Translational regulator CsrA (64 aa).

This sequence belongs to the CsrA/RsmA family. In terms of assembly, homodimer; the beta-strands of each monomer intercalate to form a hydrophobic core, while the alpha-helices form wings that extend away from the core.

The protein resides in the cytoplasm. Its function is as follows. A key translational regulator that binds mRNA to regulate translation initiation and/or mRNA stability. Mediates global changes in gene expression, shifting from rapid growth to stress survival by linking envelope stress, the stringent response and the catabolite repression systems. Usually binds in the 5'-UTR; binding at or near the Shine-Dalgarno sequence prevents ribosome-binding, repressing translation, binding elsewhere in the 5'-UTR can activate translation and/or stabilize the mRNA. Its function is antagonized by small RNA(s). This chain is Translational regulator CsrA, found in Actinobacillus pleuropneumoniae serotype 5b (strain L20).